The primary structure comprises 120 residues: MTEPTRSIDDLSPARVTTAFDLPGHTTVRSLGVAQGIVVRSRSIVGSFGASLQTIFGGNITLYTSLCEKARQQAFDKMLADARKLGANAIVAMRYDSTEIGSGVTEVICYGTAVRVTQDA.

This sequence belongs to the UPF0145 family.

The chain is UPF0145 protein Bcenmc03_5217 from Burkholderia orbicola (strain MC0-3).